The following is a 318-amino-acid chain: Ribose-phosphate pyrophosphokinase 2 (318 aa).

4 residues coordinate Mg(2+): Asp132, His134, His143, and Asp147.

This sequence belongs to the ribose-phosphate pyrophosphokinase family.

Its subcellular location is the cytoplasm. The enzyme catalyses D-ribose 5-phosphate + ATP = 5-phospho-alpha-D-ribose 1-diphosphate + AMP + H(+). It participates in metabolic intermediate biosynthesis; 5-phospho-alpha-D-ribose 1-diphosphate biosynthesis; 5-phospho-alpha-D-ribose 1-diphosphate from D-ribose 5-phosphate (route I): step 1/1. Its function is as follows. 5-phosphoribose 1-diphosphate synthase involved in nucleotide, histidine, and tryptophan biosynthesis. Active in heteromultimeric complexes with other 5-phosphoribose 1-diphosphate synthases (PRS2, PRS3, PRS4 and PRS5). The sequence is that of Ribose-phosphate pyrophosphokinase 2 (PRS2) from Saccharomyces cerevisiae (strain ATCC 204508 / S288c) (Baker's yeast).